Here is an 86-residue protein sequence, read N- to C-terminus: Small ribosomal subunit protein uS17 (86 aa).

The protein belongs to the universal ribosomal protein uS17 family. In terms of assembly, part of the 30S ribosomal subunit.

One of the primary rRNA binding proteins, it binds specifically to the 5'-end of 16S ribosomal RNA. The protein is Small ribosomal subunit protein uS17 of Nitrosococcus oceani (strain ATCC 19707 / BCRC 17464 / JCM 30415 / NCIMB 11848 / C-107).